Here is a 615-residue protein sequence, read N- to C-terminus: Membrane protein insertase YidC (615 aa).

5 helical membrane-spanning segments follow: residues 9–29 (LMFI…VLGP), 384–404 (LVGN…LVLY), 458–478 (LPML…TVTI), 516–536 (LIGA…FTMW), and 556–576 (WFPV…VIYW).

Belongs to the OXA1/ALB3/YidC family. Type 1 subfamily. In terms of assembly, interacts with the Sec translocase complex via SecD. Specifically interacts with transmembrane segments of nascent integral membrane proteins during membrane integration.

It is found in the cell inner membrane. Functionally, required for the insertion and/or proper folding and/or complex formation of integral membrane proteins into the membrane. Involved in integration of membrane proteins that insert both dependently and independently of the Sec translocase complex, as well as at least some lipoproteins. Aids folding of multispanning membrane proteins. This Caulobacter vibrioides (strain ATCC 19089 / CIP 103742 / CB 15) (Caulobacter crescentus) protein is Membrane protein insertase YidC.